The chain runs to 310 residues: Mitogen-activated protein kinase kinase 9 (310 aa).

Residues 47 to 306 (LEKLNVLGCG…APQLLAHPFL (260 aa)) enclose the Protein kinase domain. ATP is bound by residues 53–61 (LGCGNGGIV) and Lys-76. Asp-167 (proton acceptor) is an active-site residue. A phosphoserine mark is found at Ser-195 and Ser-201. Thr-205 bears the Phosphothreonine mark.

Belongs to the protein kinase superfamily. STE Ser/Thr protein kinase family. MAP kinase kinase subfamily. Post-translationally, phosphorylation at Ser-195 and Ser-201 by MAP kinase kinase kinases positively regulates kinase activity. Autophosphorylated.

It localises to the cytoplasm. Its subcellular location is the nucleus. The enzyme catalyses L-seryl-[protein] + ATP = O-phospho-L-seryl-[protein] + ADP + H(+). The catalysed reaction is L-threonyl-[protein] + ATP = O-phospho-L-threonyl-[protein] + ADP + H(+). It catalyses the reaction L-tyrosyl-[protein] + ATP = O-phospho-L-tyrosyl-[protein] + ADP + H(+). In terms of biological role, MKK9-MPK3/MPK6 module phosphorylates and activates EIN3, leading to the promotion of EIN3-mediated transcription in ethylene signaling. Autophosphorylates and also phosphorylates MPK3 and MPK6. Plays an important role in ethylene and camalexin biosynthesis and in salt stress response. MKK9-MPK6 module positively regulates leaf senescence. The protein is Mitogen-activated protein kinase kinase 9 (MKK9) of Arabidopsis thaliana (Mouse-ear cress).